The primary structure comprises 80 residues: Omega-conotoxin-like 1 (80 aa).

A signal peptide spans 1-22; it reads MKLTCVLIVVVLFLTACQLITT. Positions 23–49 are excised as a propeptide; sequence DDSTGKQRYQAWKLRSKMQNSVLSRLS. Cystine bridges form between cysteine 52-cysteine 66, cysteine 59-cysteine 70, and cysteine 65-cysteine 79.

Belongs to the conotoxin O1 superfamily. Peptide predicted to begin at Arg-51, but it seems more probable that it begins at Cys-52, since this position corresponds to a dibasic residue cleavage. Expressed by the venom duct.

The protein localises to the secreted. Its function is as follows. Omega-conotoxins act at presynaptic membranes, they bind and block voltage-gated calcium channels (Cav). The chain is Omega-conotoxin-like 1 from Conus capitaneus (Captain cone).